The chain runs to 707 residues: Choline transporter-like protein 4 (707 aa).

The Cytoplasmic segment spans residues 1 to 32 (MGEKQDPDKAYGKPAKYDPSFRGPIRNRSCTD). The chain crosses the membrane as a helical span at residues 33–53 (IICCVLFFVFILGYIAVGLVA). Topologically, residues 54 to 226 (WVYGDPQQVL…KIFEDFAQSW (173 aa)) are extracellular. 4 N-linked (GlcNAc...) asparagine glycosylation sites follow: Asn67, Asn142, Asn184, and Asn195. A helical membrane pass occupies residues 227 to 247 (YWILAALGVALVLSLLFVLLL). Residues 248 to 249 (RL) are Cytoplasmic-facing. The helical transmembrane segment at 250–270 (VAGPLVFVLIIGVLGVLAYGI) threads the bilayer. The Extracellular portion of the chain corresponds to 271–306 (YHCWNEYRLLRDKGASISQLGFTTNLSAYSSVQETW). N-linked (GlcNAc...) asparagine glycosylation occurs at Asn295. The chain crosses the membrane as a helical span at residues 307 to 327 (LAALILLAVLEGILLLMLIFL). Over 328–355 (RQRIRIAIALLEEASRAVGQMMSTLFYP) the chain is Cytoplasmic. Residues 356–376 (LVTFVLLLVCIAYWAMTALYL) form a helical membrane-spanning segment. The Extracellular portion of the chain corresponds to 377-452 (ATSGQPQYVL…GVLGLFWTIN (76 aa)). N-linked (GlcNAc...) asparagine glycosylation is found at Asn390, Asn402, and Asn413. Residues 453-473 (WVLALGQCVLAGAFASFYWAF) form a helical membrane-spanning segment. The Cytoplasmic portion of the chain corresponds to 474 to 498 (HKPRDIPTFPLSSAFIRTLRYHTGS). A helical transmembrane segment spans residues 499–519 (LAFGALILTLVQIARAILEYI). Over 520-557 (DHKLRGAQNPVARCIMCCFKCCLWCLEKFIKFLNRNAY) the chain is Extracellular. Residues 558-578 (IMIAIYGKNFCVSAKNAFMLL) form a helical membrane-spanning segment. Residues 579-594 (MRNIVRVVVLDKVTDL) lie on the Cytoplasmic side of the membrane. A helical membrane pass occupies residues 595-615 (LLFFGKLLVVGGVGVLSFFFF). Residues 616-635 (TGRIQGLGKDFESPQLNYYW) lie on the Extracellular side of the membrane. Residues 636–656 (LPIMTSIMGAYVIASGFFSVF) form a helical membrane-spanning segment. Over 657-707 (GMCVDTLFLCFLEDLERNDGSLDRPYYMSKALLKILGKKNEVPSGDKKRKK) the chain is Cytoplasmic.

This sequence belongs to the CTL (choline transporter-like) family. N-glycosylated; N-glycosylation of Asn-677 and Asn-390 is required for a proper thiamine pyrophosphate uptake.

It localises to the membrane. Its subcellular location is the apical cell membrane. It catalyses the reaction choline(out) + n H(+)(in) = choline(in) + n H(+)(out). It carries out the reaction thiamine diphosphate(out) = thiamine diphosphate(in). Functionally, choline transporter that plays a role in the choline-acetylcholine system and is required to the efferent innervation of hair cells in the olivocochlear bundle for the maintenance of physiological function of outer hair cells and the protection of hair cells from acoustic injury. Also described as a thiamine pyrophosphate transporter in colon, may mediate the absorption of microbiota-generated thiamine pyrophosphate and contribute to host thiamine (vitamin B1) homeostasis. This is Choline transporter-like protein 4 from Sus scrofa (Pig).